A 109-amino-acid polypeptide reads, in one-letter code: U16-hexatoxin-Hi1a (109 aa).

The first 16 residues, 1 to 16 (LTGHLCCMMIWWQATQ), serve as a signal peptide directing secretion. Positions 17 to 43 (VISPPLPVIREENNSHKMGVSLFPLKR) are excised as a propeptide.

Contains 2 disulfide bonds. As to expression, expressed by the venom gland.

It localises to the secreted. In terms of biological role, probable ion channel inhibitor. The protein is U16-hexatoxin-Hi1a of Hadronyche infensa (Fraser island funnel-web spider).